Here is an 80-residue protein sequence, read N- to C-terminus: Sulfur carrier protein TusA (80 aa).

Cysteine 17 acts as the Cysteine persulfide intermediate in catalysis.

This sequence belongs to the sulfur carrier protein TusA family.

Its subcellular location is the cytoplasm. Sulfur carrier protein which probably makes part of a sulfur-relay system. In Pseudomonas entomophila (strain L48), this protein is Sulfur carrier protein TusA.